We begin with the raw amino-acid sequence, 207 residues long: MDQSLANGVGGASIERNTTETRIRVAVNLDGTGVYDVKTGVGFLDHMLEQLSRHSLMDLSVAAEGDVHIDAHHTTEHSGIAIGQAVAKAVGDRKGIQRYGHAYVPMDETLTRVALDFSNRPYLIWKVSFSRDKIGDMDTELFREWFQAFAMAAGVTLHVECLYGENNHHIVESCYKALARALRAGIEIDPRKRDAVPSTKGTLGGSL.

The protein belongs to the imidazoleglycerol-phosphate dehydratase family.

The protein localises to the cytoplasm. It catalyses the reaction D-erythro-1-(imidazol-4-yl)glycerol 3-phosphate = 3-(imidazol-4-yl)-2-oxopropyl phosphate + H2O. It functions in the pathway amino-acid biosynthesis; L-histidine biosynthesis; L-histidine from 5-phospho-alpha-D-ribose 1-diphosphate: step 6/9. The sequence is that of Imidazoleglycerol-phosphate dehydratase (hisB) from Azospirillum brasilense.